The chain runs to 201 residues: Probable chemoreceptor glutamine deamidase CheD 1 (201 aa).

The protein belongs to the CheD family.

The enzyme catalyses L-glutaminyl-[protein] + H2O = L-glutamyl-[protein] + NH4(+). In terms of biological role, probably deamidates glutamine residues to glutamate on methyl-accepting chemotaxis receptors (MCPs), playing an important role in chemotaxis. The polypeptide is Probable chemoreceptor glutamine deamidase CheD 1 (Dechloromonas aromatica (strain RCB)).